The primary structure comprises 207 residues: Redox-sensing transcriptional repressor Rex (207 aa).

The H-T-H motif DNA-binding region spans 15-54 (LYYRCLNRLYEEGIEYVASKDIAERLGIKSSQVRKDLSYF). 89-94 (GAGNIG) serves as a coordination point for NAD(+).

This sequence belongs to the transcriptional regulatory Rex family. Homodimer.

Its subcellular location is the cytoplasm. In terms of biological role, modulates transcription in response to changes in cellular NADH/NAD(+) redox state. The chain is Redox-sensing transcriptional repressor Rex from Thermosipho africanus (strain TCF52B).